A 365-amino-acid polypeptide reads, in one-letter code: Chorismate synthase (365 aa).

NADP(+) contacts are provided by Arg48 and Arg54. Residues 125 to 127 (RSS), 238 to 239 (NA), Ala278, 293 to 297 (KPTSS), and Arg319 each bind FMN.

This sequence belongs to the chorismate synthase family. Homotetramer. FMNH2 is required as a cofactor.

The catalysed reaction is 5-O-(1-carboxyvinyl)-3-phosphoshikimate = chorismate + phosphate. The protein operates within metabolic intermediate biosynthesis; chorismate biosynthesis; chorismate from D-erythrose 4-phosphate and phosphoenolpyruvate: step 7/7. Catalyzes the anti-1,4-elimination of the C-3 phosphate and the C-6 proR hydrogen from 5-enolpyruvylshikimate-3-phosphate (EPSP) to yield chorismate, which is the branch point compound that serves as the starting substrate for the three terminal pathways of aromatic amino acid biosynthesis. This reaction introduces a second double bond into the aromatic ring system. The protein is Chorismate synthase of Pseudoalteromonas translucida (strain TAC 125).